The sequence spans 173 residues: Crossover junction endodeoxyribonuclease RuvC (173 aa).

Active-site residues include Asp8, Glu67, and Asp139. Residues Asp8, Glu67, and Asp139 each contribute to the Mg(2+) site.

It belongs to the RuvC family. In terms of assembly, homodimer which binds Holliday junction (HJ) DNA. The HJ becomes 2-fold symmetrical on binding to RuvC with unstacked arms; it has a different conformation from HJ DNA in complex with RuvA. In the full resolvosome a probable DNA-RuvA(4)-RuvB(12)-RuvC(2) complex forms which resolves the HJ. It depends on Mg(2+) as a cofactor.

Its subcellular location is the cytoplasm. It catalyses the reaction Endonucleolytic cleavage at a junction such as a reciprocal single-stranded crossover between two homologous DNA duplexes (Holliday junction).. Its function is as follows. The RuvA-RuvB-RuvC complex processes Holliday junction (HJ) DNA during genetic recombination and DNA repair. Endonuclease that resolves HJ intermediates. Cleaves cruciform DNA by making single-stranded nicks across the HJ at symmetrical positions within the homologous arms, yielding a 5'-phosphate and a 3'-hydroxyl group; requires a central core of homology in the junction. The consensus cleavage sequence is 5'-(A/T)TT(C/G)-3'. Cleavage occurs on the 3'-side of the TT dinucleotide at the point of strand exchange. HJ branch migration catalyzed by RuvA-RuvB allows RuvC to scan DNA until it finds its consensus sequence, where it cleaves and resolves the cruciform DNA. The sequence is that of Crossover junction endodeoxyribonuclease RuvC from Cronobacter sakazakii (strain ATCC BAA-894) (Enterobacter sakazakii).